Here is a 208-residue protein sequence, read N- to C-terminus: Probable DNA-3-methyladenine glycosylase (208 aa).

The protein belongs to the DNA glycosylase MPG family.

The protein resides in the nucleus. It carries out the reaction Hydrolysis of alkylated DNA, releasing 3-methyladenine, 3-methylguanine, 7-methylguanine and 7-methyladenine.. Its function is as follows. Hydrolysis of the deoxyribose N-glycosidic bond to excise 3-methyladenine, and 7-methylguanine from the damaged DNA polymer formed by alkylation lesions. The sequence is that of Probable DNA-3-methyladenine glycosylase from Encephalitozoon cuniculi (strain GB-M1) (Microsporidian parasite).